The following is a 336-amino-acid chain: Antigen-presenting glycoprotein CD1d1 (336 aa).

Positions 1–21 (MRYLPWLLLWAFLQVWGQSEA) are cleaved as a signal peptide. Topologically, residues 22–305 (QQKNYTFRCL…YWDARQAPVG (284 aa)) are extracellular. Asn-25, Asn-38, and Asn-60 each carry an N-linked (GlcNAc...) asparagine glycan. Residue Asp-98 coordinates a D-galactosylceramide. 2 disulfide bridges follow: Cys-122-Cys-186 and Cys-226-Cys-281. An N-linked (GlcNAc...) asparagine glycan is attached at Asn-128. 171 to 174 (DQGT) is an a D-galactosylceramide binding site. The N-linked (GlcNAc...) asparagine glycan is linked to Asn-183. An Ig-like domain is found at 207-297 (PVAWLSSVPS…LGGQDIILYW (91 aa)). Residues 306-326 (LIVFIVLIMLVVVGAVVYYIW) traverse the membrane as a helical segment. At 327–336 (RRRSAYQDIR) the chain is on the cytoplasmic side. The short motif at 332-335 (YQDI) is the Internalization signal element.

As to quaternary structure, heterodimer with B2M (beta-2-microglobulin). Interacts with MHC II and CD74. Post-translationally, N-glycosylated. As to expression, expressed on cortical thymocytes, on certain T-cell leukemias, and in various other tissues.

The protein resides in the cell membrane. The protein localises to the endosome membrane. Its subcellular location is the lysosome membrane. In terms of biological role, antigen-presenting protein that binds self and non-self glycolipids and presents them to T-cell receptors on natural killer T-cells. The sequence is that of Antigen-presenting glycoprotein CD1d1 (Cd1d1) from Mus musculus (Mouse).